The sequence spans 462 residues: Fumarate hydratase class II (462 aa).

Residues 98-100 (SGT), Arg126, 129-132 (HPND), 139-141 (SSN), and Thr187 each bind substrate. Residues 120-141 (GTRGKGRKVHPNDHVNKGQSSN) are disordered. The active-site Proton donor/acceptor is the His188. Residue Ser318 is part of the active site. Residues Ser319 and 324–326 (KVN) contribute to the substrate site.

This sequence belongs to the class-II fumarase/aspartase family. Fumarase subfamily. In terms of assembly, homotetramer.

It is found in the cytoplasm. It carries out the reaction (S)-malate = fumarate + H2O. The protein operates within carbohydrate metabolism; tricarboxylic acid cycle; (S)-malate from fumarate: step 1/1. Its function is as follows. Involved in the TCA cycle. Catalyzes the stereospecific interconversion of fumarate to L-malate. The sequence is that of Fumarate hydratase class II from Nitrosomonas europaea (strain ATCC 19718 / CIP 103999 / KCTC 2705 / NBRC 14298).